A 340-amino-acid chain; its full sequence is Ketol-acid reductoisomerase (NADP(+)) (340 aa).

Positions 2-181 (AKVFYNGDIN…GSARAGVIET (180 aa)) constitute a KARI N-terminal Rossmann domain. NADP(+) contacts are provided by residues 25–28 (YGSQ), Arg-48, Ser-52, and 82–85 (DEHQ). His-107 is an active-site residue. Gly-133 is a binding site for NADP(+). The region spanning 182 to 327 (TFQEETETDL…RELREMMPFV (146 aa)) is the KARI C-terminal knotted domain. Asp-190, Glu-194, Glu-226, and Glu-230 together coordinate Mg(2+). Ser-251 is a binding site for substrate.

This sequence belongs to the ketol-acid reductoisomerase family. Mg(2+) is required as a cofactor.

It carries out the reaction (2R)-2,3-dihydroxy-3-methylbutanoate + NADP(+) = (2S)-2-acetolactate + NADPH + H(+). The catalysed reaction is (2R,3R)-2,3-dihydroxy-3-methylpentanoate + NADP(+) = (S)-2-ethyl-2-hydroxy-3-oxobutanoate + NADPH + H(+). It functions in the pathway amino-acid biosynthesis; L-isoleucine biosynthesis; L-isoleucine from 2-oxobutanoate: step 2/4. Its pathway is amino-acid biosynthesis; L-valine biosynthesis; L-valine from pyruvate: step 2/4. In terms of biological role, involved in the biosynthesis of branched-chain amino acids (BCAA). Catalyzes an alkyl-migration followed by a ketol-acid reduction of (S)-2-acetolactate (S2AL) to yield (R)-2,3-dihydroxy-isovalerate. In the isomerase reaction, S2AL is rearranged via a Mg-dependent methyl migration to produce 3-hydroxy-3-methyl-2-ketobutyrate (HMKB). In the reductase reaction, this 2-ketoacid undergoes a metal-dependent reduction by NADPH to yield (R)-2,3-dihydroxy-isovalerate. The chain is Ketol-acid reductoisomerase (NADP(+)) from Halalkalibacterium halodurans (strain ATCC BAA-125 / DSM 18197 / FERM 7344 / JCM 9153 / C-125) (Bacillus halodurans).